Here is a 350-residue protein sequence, read N- to C-terminus: MKKIGIIGAGGIARAHATALSTIKNAELVGVYDINQQNAESFVKTFGGKSFENVDELIDASEGLIVASPNFCHKEHALQALGKHKHVLCEKPMAISLEEASIMKDTAERLSVRASMGFNYRYLSYVNILKSLIINNELGNILSIKVHFKKNSALRRKKFTWRDDANSKKTSGSLGDLGIHLIDMVWYLFESDFITESVRAKMNTNVKTKEDKQVLVDDYAEIYGQLKNKVFVNIITSKCSVPEDCGFSIEVVGHKKEFKYHTGNPHVYKLIDGLNVVDCPVPQSLLNDPPNEFYGWADSFRSELINWIASTQNDWVEIPSFSDGFRSQEVLEMFFEKDSNSQPMSVSAVN.

The protein belongs to the Gfo/Idh/MocA family.

The enzyme catalyses D-glucose 6-phosphate + NAD(+) = 3-dehydro-D-glucose 6-phosphate + NADH + H(+). It functions in the pathway antibiotic biosynthesis; kanosamine biosynthesis. Its function is as follows. Involved in the biosynthesis of kanosamine (3-amino-3-deoxy-D-glucose), which is known to have antibiotic and antifungal properties, and to be a precursor of the antibiotic neotrehalosadiamine (3,3'-diamino-3,3'-dideoxy-alpha,beta-trehalose (NTD)). Catalyzes the oxidation of glucose 6-phosphate to 3-oxo-D-glucose 6-phosphate. It can only use NAD. This Bacillus subtilis (strain 168) protein is Glucose-6-phosphate 3-dehydrogenase (ntdC).